A 694-amino-acid chain; its full sequence is Elongation factor G (694 aa).

In terms of domain architecture, tr-type G spans 9–288 (SKIRNIGIMA…VIVKWLPSPK (280 aa)). Residues 18–25 (AHIDAGKT), 82–86 (DTPGH), and 136–139 (NKMD) each bind GTP.

This sequence belongs to the TRAFAC class translation factor GTPase superfamily. Classic translation factor GTPase family. EF-G/EF-2 subfamily.

It is found in the cytoplasm. Its function is as follows. Catalyzes the GTP-dependent ribosomal translocation step during translation elongation. During this step, the ribosome changes from the pre-translocational (PRE) to the post-translocational (POST) state as the newly formed A-site-bound peptidyl-tRNA and P-site-bound deacylated tRNA move to the P and E sites, respectively. Catalyzes the coordinated movement of the two tRNA molecules, the mRNA and conformational changes in the ribosome. The chain is Elongation factor G from Chlamydia caviae (strain ATCC VR-813 / DSM 19441 / 03DC25 / GPIC) (Chlamydophila caviae).